We begin with the raw amino-acid sequence, 29 residues long: Dermaseptin-J5 (29 aa).

Position 29 is a valine amide (Val29).

In terms of tissue distribution, expressed by the skin glands.

It is found in the secreted. In terms of biological role, has antimicrobial activity. The polypeptide is Dermaseptin-J5 (Phasmahyla jandaia (Jandaia leaf frog)).